The following is a 42-amino-acid chain: Ostricacin-4 (42 aa).

3 cysteine pairs are disulfide-bonded: Cys-8–Cys-36, Cys-15–Cys-30, and Cys-20–Cys-37.

It localises to the secreted. Functionally, has antibacterial activity against the Gram-positive bacterium S.aureus 1056 MRSA (MIC=11.48 ug/ml) and the Gram-negative bacterium E.coli O157:H7 (MIC=12.03 ug/ml). Does not have antifungal activity against the yeast C.albicans 3153A. The polypeptide is Ostricacin-4 (Struthio camelus (Common ostrich)).